The sequence spans 342 residues: Serine/threonine-protein kinase ISR1 (342 aa).

Residues 59–342 (WRLTRVLGCG…SNARVAEHAF (284 aa)) form the Protein kinase domain. ATP is bound by residues 65–73 (LGCGSVACV) and K84. D190 functions as the Proton acceptor in the catalytic mechanism.

Belongs to the protein kinase superfamily. Ser/Thr protein kinase family.

The enzyme catalyses L-seryl-[protein] + ATP = O-phospho-L-seryl-[protein] + ADP + H(+). It carries out the reaction L-threonyl-[protein] + ATP = O-phospho-L-threonyl-[protein] + ADP + H(+). Probable serine/threonine protein kinase which may function redundantly with MPK1-independent branch of the PCK1 pathway. This is Serine/threonine-protein kinase ISR1 (ISR1) from Eremothecium gossypii (strain ATCC 10895 / CBS 109.51 / FGSC 9923 / NRRL Y-1056) (Yeast).